The sequence spans 251 residues: Plant UBX domain-containing protein 1 (251 aa).

Methionine 1 bears the N-acetylmethionine mark. The 77-residue stretch at 104 to 180 (SKLTKAVIRV…GFVPGAIVYF (77 aa)) folds into the UBX domain. Residues 212–251 (AVEPVESSSEPATVDSSAVPVEHERKSTEKKTTKPKWFKM) form a disordered region. A compositionally biased stretch (polar residues) spans 217–227 (ESSSEPATVDS). Residues 232 to 243 (VEHERKSTEKKT) show a composition bias toward basic and acidic residues.

In terms of assembly, interacts with CDC48A (non-hexameric) via its UBX-containing C-terminal domain.

The protein localises to the cytoplasm. Regulates CDC48A by inhibiting its ATPase activity and by promoting the disassembly of the active hexamer. The protein is Plant UBX domain-containing protein 1 of Arabidopsis thaliana (Mouse-ear cress).